Here is a 410-residue protein sequence, read N- to C-terminus: Zinc finger TRAF-type-containing protein 1 (410 aa).

The segment covering 1–13 has biased composition (gly residues); that stretch reads MSGAEEAGGGGPA. The interval 1 to 22 is disordered; the sequence is MSGAEEAGGGGPAAGPAGSVPA. The segment at 117–162 adopts an RING-type; degenerate zinc-finger fold; sequence CTVCLDLPKASVYQCTNGHLMCAGCFIHLLADARLKEEQATCPNCR. Residues 158–231 form a TRAF-type zinc finger; sequence CPNCRCEISK…PWHGPFHELT (74 aa).

This sequence belongs to the ZFTRAF1 family. Interacts with LGALS3.

The protein resides in the cytoplasm. The protein localises to the perinuclear region. The sequence is that of Zinc finger TRAF-type-containing protein 1 from Bos taurus (Bovine).